Consider the following 239-residue polypeptide: NADH-quinone oxidoreductase chain 2 (239 aa).

4 residues coordinate [2Fe-2S] cluster: C96, C101, C137, and C141.

It belongs to the complex I 24 kDa subunit family. In terms of assembly, NDH-1 is composed of at least 14 different subunits, Nqo1 to Nqo14. The complex has a L-shaped structure, with the hydrophobic arm (subunits Nqo7, Nqo8, Nqo10 to Nqo14) embedded in the inner membrane and the hydrophilic peripheral arm (subunits Nqo1 to Nqo6, Nqo9) protruding into the bacterial cytoplasm. The hydrophilic domain contains all the redox centers. The cofactor is [2Fe-2S] cluster.

The protein resides in the cell inner membrane. The enzyme catalyses a quinone + NADH + 5 H(+)(in) = a quinol + NAD(+) + 4 H(+)(out). In terms of biological role, NDH-1 shuttles electrons from NADH, via FMN and iron-sulfur (Fe-S) centers, to quinones in the respiratory chain. The immediate electron acceptor for the enzyme in this species is believed to be ubiquinone. Couples the redox reaction to proton translocation (for every two electrons transferred, four hydrogen ions are translocated across the cytoplasmic membrane), and thus conserves the redox energy in a proton gradient. The sequence is that of NADH-quinone oxidoreductase chain 2 (nqo2) from Paracoccus denitrificans.